Consider the following 235-residue polypeptide: Elongation factor Tu, chloroplastic (235 aa).

Residues K1–Q125 form the tr-type G domain. A GTP-binding site is contributed by N47 to D50.

The protein belongs to the TRAFAC class translation factor GTPase superfamily. Classic translation factor GTPase family. EF-Tu/EF-1A subfamily.

It localises to the plastid. The protein localises to the chloroplast. The catalysed reaction is GTP + H2O = GDP + phosphate + H(+). Its function is as follows. GTP hydrolase that promotes the GTP-dependent binding of aminoacyl-tRNA to the A-site of ribosomes during protein biosynthesis. In Gonium pectorale (Green alga), this protein is Elongation factor Tu, chloroplastic (tufA).